We begin with the raw amino-acid sequence, 190 residues long: MKQLFLIIGAPGSGKTTDASIIANDNANITHYSTGDLLRAEVASGSELGKTIDSFISKGNLVPLEVVVNTIITALKNAPTNTILIDGYPRSVEQMLEFDKVLKNQSEVNLKGVIEVKVSEEVARERVLGRARGADDNEEVFNNRMKVYLEPLNEITNFYAKENIHHIINGERSIEAIVADMKNLINELLK.

Residue 12-17 (GSGKTT) coordinates ATP. Residues 33–62 (STGDLLRAEVASGSELGKTIDSFISKGNLV) form an NMP region. Residues threonine 34, arginine 39, 60-62 (NLV), 87-90 (GYPR), and glutamine 94 contribute to the AMP site. The LID stretch occupies residues 129–135 (GRARGAD). Arginine 130 contributes to the ATP binding site. The AMP site is built by arginine 132 and arginine 144. An ATP-binding site is contributed by arginine 172.

The protein belongs to the adenylate kinase family. Monomer.

Its subcellular location is the cytoplasm. It catalyses the reaction AMP + ATP = 2 ADP. It participates in purine metabolism; AMP biosynthesis via salvage pathway; AMP from ADP: step 1/1. In terms of biological role, catalyzes the reversible transfer of the terminal phosphate group between ATP and AMP. Plays an important role in cellular energy homeostasis and in adenine nucleotide metabolism. This is Adenylate kinase from Campylobacter lari (strain RM2100 / D67 / ATCC BAA-1060).